Here is a 30-residue protein sequence, read N- to C-terminus: Circulin-C (30 aa).

Residues 1-30 constitute a cross-link (cyclopeptide (Gly-Asn)); it reads GIPCGESCVFIPCITSVAGCSCKSKVCYRN. 3 cysteine pairs are disulfide-bonded: Cys4-Cys20, Cys8-Cys22, and Cys13-Cys27.

This is a cyclic peptide.

In terms of biological role, probably participates in a plant defense mechanism. Inhibits the cytopathic effects of the human immunodeficiency virus. This chain is Circulin-C, found in Chassalia parviflora.